We begin with the raw amino-acid sequence, 354 residues long: Methylthioribose-1-phosphate isomerase (354 aa).

Residues 58–60, arginine 101, and glutamine 204 contribute to the substrate site; that span reads RGA. The active-site Proton donor is the aspartate 245. 255-256 contributes to the substrate binding site; the sequence is NK.

Belongs to the eIF-2B alpha/beta/delta subunits family. MtnA subfamily.

It catalyses the reaction 5-(methylsulfanyl)-alpha-D-ribose 1-phosphate = 5-(methylsulfanyl)-D-ribulose 1-phosphate. It participates in amino-acid biosynthesis; L-methionine biosynthesis via salvage pathway; L-methionine from S-methyl-5-thio-alpha-D-ribose 1-phosphate: step 1/6. In terms of biological role, catalyzes the interconversion of methylthioribose-1-phosphate (MTR-1-P) into methylthioribulose-1-phosphate (MTRu-1-P). The polypeptide is Methylthioribose-1-phosphate isomerase (Stenotrophomonas maltophilia (strain R551-3)).